The chain runs to 314 residues: MKKALIIGTRSSPLALWQAEFIKAELSKHYPSLDISLRHIKTTGDKILDAPLAKIGDKGLFTREIEHVMLRNEIDLAVHSLKDLPTETPEGLVITAITEREDNRDVLISKGKYTLKTLPQGAIVATSSLRRRSQLLHLRPDLEVIDMRGNLNTRFKRFEEGDAEAMLLAFAGVHRLEFSEHIAEIISFDDILPAVGQGALGIETRIDDEETRELLKVLNHAETELCTKCERSLLRTLEGGCQIPIGAHARIENGTFHFATYVGSIDGKRAIKKSLSRENVTTVEEAEQIGIEVADAARAAGANEILCEIRTDNA.

C241 carries the S-(dipyrrolylmethanemethyl)cysteine modification.

This sequence belongs to the HMBS family. In terms of assembly, monomer. The cofactor is dipyrromethane.

It catalyses the reaction 4 porphobilinogen + H2O = hydroxymethylbilane + 4 NH4(+). The protein operates within porphyrin-containing compound metabolism; protoporphyrin-IX biosynthesis; coproporphyrinogen-III from 5-aminolevulinate: step 2/4. It participates in porphyrin-containing compound metabolism; chlorophyll biosynthesis. Functionally, tetrapolymerization of the monopyrrole PBG into the hydroxymethylbilane pre-uroporphyrinogen in several discrete steps. In Chloroherpeton thalassium (strain ATCC 35110 / GB-78), this protein is Porphobilinogen deaminase.